We begin with the raw amino-acid sequence, 413 residues long: Tyrosine--tRNA ligase 2 (413 aa).

The 'HIGH' region signature appears at 58–67 (PSAPDVHLGH). Repeat copies occupy residues 89–94 (GDFTGK) and 96–101 (GDPTGK). The interval 89–101 (GDFTGKIGDPTGK) is 2 X 6 AA tandem repeats. Residues 242-246 (KMSKS) carry the 'KMSKS' region motif. Lysine 245 lines the ATP pocket. The 61-residue stretch at 353-413 (IAMIDLLVKL…VGKRKFLKLQ (61 aa)) folds into the S4 RNA-binding domain.

Belongs to the class-I aminoacyl-tRNA synthetase family. TyrS type 2 subfamily. Homodimer.

It localises to the cytoplasm. It catalyses the reaction tRNA(Tyr) + L-tyrosine + ATP = L-tyrosyl-tRNA(Tyr) + AMP + diphosphate + H(+). In terms of biological role, catalyzes the attachment of tyrosine to tRNA(Tyr) in a two-step reaction: tyrosine is first activated by ATP to form Tyr-AMP and then transferred to the acceptor end of tRNA(Tyr). This chain is Tyrosine--tRNA ligase 2, found in Bacillus subtilis (strain 168).